The primary structure comprises 179 residues: Ribosome maturation factor RimP (179 aa).

Belongs to the RimP family.

It localises to the cytoplasm. Its function is as follows. Required for maturation of 30S ribosomal subunits. In Prosthecochloris aestuarii (strain DSM 271 / SK 413), this protein is Ribosome maturation factor RimP.